Consider the following 537-residue polypeptide: Aminopeptidase Y (537 aa).

An N-terminal signal peptide occupies residues 1–21 (MHFSLKQLAVAAFYATNLGSA). A propeptide spanning residues 22–56 (YVIPQFFQEAFQQEEPIENYLPQLNDDDSSAVAAN) is cleaved from the precursor. Residues Asn-85, Asn-96, Asn-115, Asn-150, and Asn-162 are each glycosylated (N-linked (GlcNAc...) asparagine). His-314 and Asp-326 together coordinate Zn(2+). Glu-358 functions as the Proton acceptor in the catalytic mechanism. Glu-359 is a binding site for Zn(2+). N-linked (GlcNAc...) asparagine glycosylation is present at Asn-371. Asp-387 contributes to the Zn(2+) binding site. Residue Asn-427 is glycosylated (N-linked (GlcNAc...) asparagine). Residue His-472 coordinates Zn(2+). Asn-480 carries an N-linked (GlcNAc...) asparagine glycan.

Belongs to the peptidase M28 family. M28A subfamily. Monomer. The cofactor is Zn(2+).

It is found in the vacuole. It carries out the reaction Preferentially, release of N-terminal lysine.. This is Aminopeptidase Y (APE3) from Saccharomyces cerevisiae (strain ATCC 204508 / S288c) (Baker's yeast).